The chain runs to 373 residues: Forkhead box protein F1 (373 aa).

The segment at 1-51 (MTAEIQQPPSQPPAQSSPMSAATDKHGGQPSVMESANCATKTKKTNAGIRR) is disordered. A compositionally biased stretch (low complexity) spans 13 to 22 (PAQSSPMSAA). Residues 54-148 (KPPYSYIALI…EEGSFRRRPR (95 aa)) constitute a DNA-binding region (fork-head). Disordered regions lie at residues 236 to 255 (GSSG…LGGG) and 283 to 306 (QPLS…SLDQ). Residues 286–306 (SPCNSAANPLSSSLSSHSLDQ) show a composition bias toward low complexity.

It is found in the nucleus. Its function is as follows. Probable transcription factor. Required for smooth muscle (visceral mesoderm) differentiation during gut development. Also required for normal proliferation of the lateral plate mesoderm. Acts as a downstream mediator of bmp4-signaling. The protein is Forkhead box protein F1 of Xenopus tropicalis (Western clawed frog).